We begin with the raw amino-acid sequence, 249 residues long: 5'-nucleotidase SurE (249 aa).

D8, D9, S39, and N91 together coordinate a divalent metal cation.

The protein belongs to the SurE nucleotidase family. The cofactor is a divalent metal cation.

The protein resides in the cytoplasm. The enzyme catalyses a ribonucleoside 5'-phosphate + H2O = a ribonucleoside + phosphate. Nucleotidase that shows phosphatase activity on nucleoside 5'-monophosphates. The sequence is that of 5'-nucleotidase SurE from Magnetococcus marinus (strain ATCC BAA-1437 / JCM 17883 / MC-1).